A 252-amino-acid polypeptide reads, in one-letter code: 5'-nucleotidase SurE (252 aa).

The a divalent metal cation site is built by D8, D9, S39, and N91.

This sequence belongs to the SurE nucleotidase family. A divalent metal cation serves as cofactor.

The protein localises to the cytoplasm. It carries out the reaction a ribonucleoside 5'-phosphate + H2O = a ribonucleoside + phosphate. In terms of biological role, nucleotidase that shows phosphatase activity on nucleoside 5'-monophosphates. The polypeptide is 5'-nucleotidase SurE (Bordetella bronchiseptica (strain ATCC BAA-588 / NCTC 13252 / RB50) (Alcaligenes bronchisepticus)).